Here is a 616-residue protein sequence, read N- to C-terminus: Dihydroxy-acid dehydratase (616 aa).

Asp-81 contributes to the Mg(2+) binding site. Cys-122 is a binding site for [2Fe-2S] cluster. Mg(2+)-binding residues include Asp-123 and Lys-124. N6-carboxylysine is present on Lys-124. Cys-195 lines the [2Fe-2S] cluster pocket. Glu-491 serves as a coordination point for Mg(2+). Catalysis depends on Ser-517, which acts as the Proton acceptor.

This sequence belongs to the IlvD/Edd family. In terms of assembly, homodimer. Requires [2Fe-2S] cluster as cofactor. It depends on Mg(2+) as a cofactor.

It catalyses the reaction (2R)-2,3-dihydroxy-3-methylbutanoate = 3-methyl-2-oxobutanoate + H2O. It carries out the reaction (2R,3R)-2,3-dihydroxy-3-methylpentanoate = (S)-3-methyl-2-oxopentanoate + H2O. The protein operates within amino-acid biosynthesis; L-isoleucine biosynthesis; L-isoleucine from 2-oxobutanoate: step 3/4. Its pathway is amino-acid biosynthesis; L-valine biosynthesis; L-valine from pyruvate: step 3/4. In terms of biological role, functions in the biosynthesis of branched-chain amino acids. Catalyzes the dehydration of (2R,3R)-2,3-dihydroxy-3-methylpentanoate (2,3-dihydroxy-3-methylvalerate) into 2-oxo-3-methylpentanoate (2-oxo-3-methylvalerate) and of (2R)-2,3-dihydroxy-3-methylbutanoate (2,3-dihydroxyisovalerate) into 2-oxo-3-methylbutanoate (2-oxoisovalerate), the penultimate precursor to L-isoleucine and L-valine, respectively. In Escherichia coli O157:H7 (strain EC4115 / EHEC), this protein is Dihydroxy-acid dehydratase.